Reading from the N-terminus, the 300-residue chain is GTPase Era (300 aa).

The Era-type G domain occupies 8–176 (RCGYVAIVGR…EALIAKHLPE (169 aa)). Positions 16-23 (GRPNVGKS) are G1. Position 16-23 (16-23 (GRPNVGKS)) interacts with GTP. Positions 42-46 (QTTRH) are G2. The G3 stretch occupies residues 63–66 (DTPG). GTP contacts are provided by residues 63-67 (DTPGM) and 125-128 (NKTD). The segment at 125-128 (NKTD) is G4. The segment at 155–157 (ISA) is G5. In terms of domain architecture, KH type-2 spans 199–283 (VREKIMRQLG…MLNLWVKVKG (85 aa)).

Belongs to the TRAFAC class TrmE-Era-EngA-EngB-Septin-like GTPase superfamily. Era GTPase family. Monomer.

It is found in the cytoplasm. The protein resides in the cell inner membrane. In terms of biological role, an essential GTPase that binds both GDP and GTP, with rapid nucleotide exchange. Plays a role in 16S rRNA processing and 30S ribosomal subunit biogenesis and possibly also in cell cycle regulation and energy metabolism. This chain is GTPase Era, found in Pseudomonas putida (strain W619).